A 729-amino-acid polypeptide reads, in one-letter code: DNA topoisomerase 3 (729 aa).

Residues 3–136 (KSVVIAEKPS…IKRLWISSVT (134 aa)) form the Toprim domain. Mg(2+)-binding residues include E9 and D105. Residues 153–594 (YDNLYASAVA…EMKNYTKEIV (442 aa)) form the Topo IA-type catalytic domain. The segment at 187–192 (NCGRVQ) is interaction with DNA. Y310 serves as the catalytic O-(5'-phospho-DNA)-tyrosine intermediate. The segment covering 686 to 713 (ERRKKESGNKADKRDVQKYMKQQKKEEE) has biased composition (basic and acidic residues). Positions 686 to 718 (ERRKKESGNKADKRDVQKYMKQQKKEEEPLNNP) are disordered.

Belongs to the type IA topoisomerase family. The cofactor is Mg(2+).

The enzyme catalyses ATP-independent breakage of single-stranded DNA, followed by passage and rejoining.. In terms of biological role, releases the supercoiling and torsional tension of DNA, which is introduced during the DNA replication and transcription, by transiently cleaving and rejoining one strand of the DNA duplex. Introduces a single-strand break via transesterification at a target site in duplex DNA. The scissile phosphodiester is attacked by the catalytic tyrosine of the enzyme, resulting in the formation of a DNA-(5'-phosphotyrosyl)-enzyme intermediate and the expulsion of a 3'-OH DNA strand. The free DNA strand then undergoes passage around the unbroken strand, thus removing DNA supercoils. Finally, in the religation step, the DNA 3'-OH attacks the covalent intermediate to expel the active-site tyrosine and restore the DNA phosphodiester backbone. The sequence is that of DNA topoisomerase 3 from Bacillus cereus (strain ZK / E33L).